The chain runs to 90 residues: Acylphosphatase (90 aa).

Residues 3 to 90 enclose the Acylphosphatase-like domain; sequence AIEVDVFGLV…FETNDFAIRG (88 aa). Active-site residues include Arg18 and Asn36.

Belongs to the acylphosphatase family.

The enzyme catalyses an acyl phosphate + H2O = a carboxylate + phosphate + H(+). The protein is Acylphosphatase (acyP) of Leuconostoc mesenteroides subsp. mesenteroides (strain ATCC 8293 / DSM 20343 / BCRC 11652 / CCM 1803 / JCM 6124 / NCDO 523 / NBRC 100496 / NCIMB 8023 / NCTC 12954 / NRRL B-1118 / 37Y).